A 182-amino-acid chain; its full sequence is MTFDQSNFKSLIRPVVDFPKPGVVFRDITPLFQSPKATRQVIDSFVQRYIDAEFSHIGVMDARGFLIGSVVAYQLNKPLVLFRKQGKLPADVLSEAYQTEYGEAYLEVHADSLCEGDSVVMFDDLIATGGTLIAAANLIRRMGAEVYEAAAIIDLPELGGSKRLNDLKIPTFCLTEFALDEQ.

Belongs to the purine/pyrimidine phosphoribosyltransferase family. In terms of assembly, homodimer.

It is found in the cytoplasm. It catalyses the reaction AMP + diphosphate = 5-phospho-alpha-D-ribose 1-diphosphate + adenine. It functions in the pathway purine metabolism; AMP biosynthesis via salvage pathway; AMP from adenine: step 1/1. Its function is as follows. Catalyzes a salvage reaction resulting in the formation of AMP, that is energically less costly than de novo synthesis. This is Adenine phosphoribosyltransferase from Pseudomonas syringae pv. syringae (strain B728a).